We begin with the raw amino-acid sequence, 94 residues long: Small ribosomal subunit protein uS19 (94 aa).

Belongs to the universal ribosomal protein uS19 family.

Protein S19 forms a complex with S13 that binds strongly to the 16S ribosomal RNA. The protein is Small ribosomal subunit protein uS19 of Carboxydothermus hydrogenoformans (strain ATCC BAA-161 / DSM 6008 / Z-2901).